The chain runs to 147 residues: Small ribosomal subunit protein eS19 (147 aa).

This sequence belongs to the eukaryotic ribosomal protein eS19 family. As to quaternary structure, part of the 30S ribosomal subunit.

Its function is as follows. May be involved in maturation of the 30S ribosomal subunit. In Archaeoglobus fulgidus (strain ATCC 49558 / DSM 4304 / JCM 9628 / NBRC 100126 / VC-16), this protein is Small ribosomal subunit protein eS19.